Reading from the N-terminus, the 289-residue chain is 5'-3' exonuclease (289 aa).

The region spanning 166-256 (VEPQKIPDYL…EEDLKIKRPD (91 aa)) is the 5'-3' exonuclease domain.

5'-3' exonuclease acting preferentially on double-stranded DNA. This is 5'-3' exonuclease from Aquifex aeolicus (strain VF5).